The primary structure comprises 500 residues: Probable malate:quinone oxidoreductase (500 aa).

This sequence belongs to the MQO family. The cofactor is FAD.

It catalyses the reaction (S)-malate + a quinone = a quinol + oxaloacetate. The protein operates within carbohydrate metabolism; tricarboxylic acid cycle; oxaloacetate from (S)-malate (quinone route): step 1/1. This chain is Probable malate:quinone oxidoreductase, found in Bacillus cereus (strain AH187).